Consider the following 545-residue polypeptide: Glucose starvation modulator protein 1 (545 aa).

Residues 20–48 (CGFCHEKHLQCDVGRPCQNCRKRNIASFC) constitute a DNA-binding region (zn(2)-C6 fungal-type). Positions 51-60 (KVKRRRKRKR) are enriched in basic residues. Disordered regions lie at residues 51 to 131 (KVKR…AMKD) and 228 to 270 (YISL…WQQQ). Positions 61–71 (SDASNFDKDEA) are enriched in basic and acidic residues. A compositionally biased stretch (polar residues) spans 72 to 92 (ATQTLNFNTVNPGEGSSSAMT). Positions 98 to 110 (TGTTTATTTRTTT) are enriched in low complexity. Residues 111–125 (NFRSESKASSSTENI) are compositionally biased toward polar residues. The segment covering 257–270 (QQKESQQMQLWQQQ) has biased composition (low complexity). The PAS domain maps to 416–486 (ELENMSKLVN…DLFHEHLAFG (71 aa)).

Belongs to the ERT1/acuK family.

The protein localises to the nucleus. In terms of biological role, transcription factor which regulates nonfermentable carbon utilization. The chain is Glucose starvation modulator protein 1 (GSM1) from Zygosaccharomyces rouxii (strain ATCC 2623 / CBS 732 / NBRC 1130 / NCYC 568 / NRRL Y-229).